Consider the following 629-residue polypeptide: MNRQVCKTSGGGSLSFSGRSAVVSGSGGGGSSSRMSCVARSVAAGGGASGFRGGAGGFGSRSLYNLGGHKSISMSVAAGGSRAGGFGGGRSICGSGFGGGLGGGLGGGLGSGFGGGFGGGFGGAGAFGGAGGFGGAGGFGGPGGFGGPGGFPGGIQEVTVNQSLLQPLNVEIDPQIGQVRAQEREQIKTLNNKFASFIDKVRFLEQQNKVLETKWELLQRQGPNSVTGTNNLEPLFENRINYLRSYLDSIVGERGRLDSELRSMQDLVEDFKKKYEDEINKRTAAENEFVTLKKDVDAAYMNKVELQAKVDSLMDEINFLRTLYDAELSQMQSHVSDMSVVLSMDNNRSLDLDSIIAEVRAQYEDIAQRSRAEAEAWYQTKLGELQTTAGRHGDDLRSTKNEIAEINRMIQRLRNEIENVKKQNASLQTAIAEAEQRGELALKDANAKLQELQAALQQAKDDLARLLRDYQELMNVKLALDVEIATYRKLLEGEESRMSGECQSAVSISVVNSSSTTSAAAGGYGGGYGGGYGGGFGVGGGAGSGFGRGGGSGFGGGSGLGGGSGFGGGSGLGGGSGLGGGSIGFSVGSSGFGSGSGGRIGVSGGGFSSGSSSRGSSVKFSQSSQRYSR.

The segment at 1–182 (MNRQVCKTSG…DPQIGQVRAQ (182 aa)) is head. 2 positions are modified to phosphoserine: Ser-13 and Ser-62. The tract at residues 183–218 (EREQIKTLNNKFASFIDKVRFLEQQNKVLETKWELL) is coil 1A. Positions 183 to 498 (EREQIKTLNN…KLLEGEESRM (316 aa)) constitute an IF rod domain. Residues 219-239 (QRQGPNSVTGTNNLEPLFENR) form a linker 1 region. Positions 240–331 (INYLRSYLDS…TLYDAELSQM (92 aa)) are coil 1B. Lys-281 bears the N6,N6-dimethyllysine mark. Residues 332–355 (QSHVSDMSVVLSMDNNRSLDLDSI) form a linker 12 region. Residue Ser-349 is modified to Phosphoserine. Positions 356 to 494 (IAEVRAQYED…ATYRKLLEGE (139 aa)) are coil 2. The tract at residues 495–629 (ESRMSGECQS…FSQSSQRYSR (135 aa)) is tail. Residues 603-629 (SGGGFSSGSSSRGSSVKFSQSSQRYSR) are disordered. Over residues 618–629 (VKFSQSSQRYSR) the composition is skewed to polar residues.

Belongs to the intermediate filament family. As to quaternary structure, heterotetramer of two type I and two type II keratins. Keratin-3 associates with keratin-12. As to expression, cornea specific. Expressed in the basal cells of corneal epithelium and stroma. Also expressed in esophageal epithelium.

The chain is Keratin, type II cytoskeletal 3 (KRT3) from Oryctolagus cuniculus (Rabbit).